Reading from the N-terminus, the 743-residue chain is 1,4-alpha-glucan branching enzyme GlgB (743 aa).

The Nucleophile role is filled by aspartate 416. The Proton donor role is filled by glutamate 469.

This sequence belongs to the glycosyl hydrolase 13 family. GlgB subfamily. Monomer.

The catalysed reaction is Transfers a segment of a (1-&gt;4)-alpha-D-glucan chain to a primary hydroxy group in a similar glucan chain.. It functions in the pathway glycan biosynthesis; glycogen biosynthesis. Functionally, catalyzes the formation of the alpha-1,6-glucosidic linkages in glycogen by scission of a 1,4-alpha-linked oligosaccharide from growing alpha-1,4-glucan chains and the subsequent attachment of the oligosaccharide to the alpha-1,6 position. The sequence is that of 1,4-alpha-glucan branching enzyme GlgB from Shewanella baltica (strain OS223).